A 264-amino-acid chain; its full sequence is Interleukin-33 (264 aa).

The tract at residues 1 to 67 (MRPRMKYSNS…ETCYFGKEPA (67 aa)) is homeodomain-like HTH domain. Residues 1–101 (MRPRMKYSNS…RSLLGSIQAF (101 aa)) constitute a propeptide that is removed on maturation. Positions 66-108 (PAKRYSLKSGSKHEGRLSTCLPDSRKRSLLGSIQAFAASVDTL) are interaction with RELA.

This sequence belongs to the IL-1 family. Highly divergent. As to quaternary structure, forms a 1:1:1 heterotrimeric complex with its primary high-affinity receptor IL1RL1 and the coreceptor IL1RAP. Interacts with cargo receptor TMED10; the interaction mediates the translocation from the cytoplasm into the ERGIC (endoplasmic reticulum-Golgi intermediate compartment) and thereby secretion. In terms of processing, the full-length protein can be released from cells and is able to signal via the IL1RL1/ST2 receptor. However, proteolytic processing by CELA1, CSTG/cathepsin G and ELANE/neutrophil elastase produces C-terminal peptides that are more active than the unprocessed full-length protein. May also be proteolytically processed by calpains. Proteolytic cleavage mediated by apoptotic caspases including CASP3 and CASP7 results in IL33 inactivation. In vitro proteolytic cleavage by CASP1 was reported but could not be confirmed in vivo suggesting that IL33 is probably not a direct substrate for that caspase.

It is found in the nucleus. Its subcellular location is the chromosome. The protein localises to the cytoplasm. It localises to the cytoplasmic vesicle. The protein resides in the secretory vesicle. It is found in the secreted. In terms of biological role, cytokine that binds to and signals through the IL1RL1/ST2 receptor which in turn activates NF-kappa-B and MAPK signaling pathways in target cells. Involved in the maturation of Th2 cells inducing the secretion of T-helper type 2-associated cytokines. Also involved in activation of mast cells, basophils, eosinophils and natural killer cells. Acts as a chemoattractant for Th2 cells, and may function as an 'alarmin', that amplifies immune responses during tissue injury. Induces rapid UCP2-dependent mitochondrial rewiring that attenuates the generation of reactive oxygen species and preserves the integrity of Krebs cycle required for persistent production of itaconate and subsequent GATA3-dependent differentiation of inflammation-resolving alternatively activated macrophages. Its function is as follows. In quiescent endothelia the uncleaved form is constitutively and abundantly expressed, and acts as a chromatin-associated nuclear factor with transcriptional repressor properties, it may sequester nuclear NF-kappaB/RELA, lowering expression of its targets. This form is rapidely lost upon angiogenic or pro-inflammatory activation. This Rattus norvegicus (Rat) protein is Interleukin-33.